The primary structure comprises 149 residues: Potassium binding protein Kbp (149 aa).

The 69-residue stretch at aspartate 23–threonine 91 folds into the BON domain. In terms of domain architecture, LysM spans glutamine 97–isoleucine 146.

It localises to the cytoplasm. In terms of biological role, highly specific potassium binding protein that is required for normal growth in the presence of high levels of external K(+). May act as a sensor of cytoplasmic K(+) concentration. The protein is Potassium binding protein Kbp of Escherichia coli O6:H1 (strain CFT073 / ATCC 700928 / UPEC).